Consider the following 815-residue polypeptide: Probable bifunctional folylpolyglutamate synthase/dihydropteroate synthase (815 aa).

Positions 1-416 (MRYDEAANFL…LVAGSLFAVA (416 aa)) are folylpolyglutamate synthase. 47–53 (GSNGKGS) lines the ATP pocket. Residues 553 to 803 (TAVMGILNVT…DVPENVAAVR (251 aa)) form the Pterin-binding domain. Positions 555-815 (VMGILNVTPD…EATRTGADAE (261 aa)) are DHPS. Position 560 (Asn560) interacts with Mg(2+). (7,8-dihydropterin-6-yl)methyl diphosphate-binding positions include Thr600, Asp633, Asn652, Asp722, Lys758, and 791–793 (RVH).

In the N-terminal section; belongs to the folylpolyglutamate synthase family. The protein in the C-terminal section; belongs to the DHPS family. It depends on Mg(2+) as a cofactor.

It carries out the reaction (6S)-5,6,7,8-tetrahydrofolyl-(gamma-L-Glu)(n) + L-glutamate + ATP = (6S)-5,6,7,8-tetrahydrofolyl-(gamma-L-Glu)(n+1) + ADP + phosphate + H(+). The catalysed reaction is (7,8-dihydropterin-6-yl)methyl diphosphate + 4-aminobenzoate = 7,8-dihydropteroate + diphosphate. The protein operates within cofactor biosynthesis; tetrahydrofolylpolyglutamate biosynthesis. Its pathway is cofactor biosynthesis; tetrahydrofolate biosynthesis; 7,8-dihydrofolate from 2-amino-4-hydroxy-6-hydroxymethyl-7,8-dihydropteridine diphosphate and 4-aminobenzoate: step 1/2. Can complement an H.volcanii mutant strain that is thymidine auxotroph because it lacks the two dihydrofolate reductase genes encoded by hdrA and hdrB. The sequence is that of Probable bifunctional folylpolyglutamate synthase/dihydropteroate synthase (folP) from Halobacterium salinarum (strain ATCC 700922 / JCM 11081 / NRC-1) (Halobacterium halobium).